Consider the following 178-residue polypeptide: Ribosomal RNA small subunit methyltransferase G (178 aa).

Residues glycine 54, leucine 59, 105–106 (LE), and arginine 120 each bind S-adenosyl-L-methionine.

It belongs to the methyltransferase superfamily. RNA methyltransferase RsmG family.

The protein resides in the cytoplasm. The enzyme catalyses guanosine(527) in 16S rRNA + S-adenosyl-L-methionine = N(7)-methylguanosine(527) in 16S rRNA + S-adenosyl-L-homocysteine. Its function is as follows. Specifically methylates the N7 position of guanine in position 527 of 16S rRNA. This Helicobacter pylori (strain HPAG1) protein is Ribosomal RNA small subunit methyltransferase G.